We begin with the raw amino-acid sequence, 478 residues long: Histidine--tRNA ligase (478 aa).

This sequence belongs to the class-II aminoacyl-tRNA synthetase family. In terms of assembly, homodimer.

Its subcellular location is the cytoplasm. The enzyme catalyses tRNA(His) + L-histidine + ATP = L-histidyl-tRNA(His) + AMP + diphosphate + H(+). This is Histidine--tRNA ligase (hisS) from Xanthomonas axonopodis pv. citri (strain 306).